We begin with the raw amino-acid sequence, 289 residues long: Ribonuclease HII (289 aa).

The tract at residues 1–55 (MIRDQAKTPGRAKSAAAAKASPAAKGGGNEAAQSAAGKAAAKPAAKPATSKSGKG) is disordered. Low complexity-rich tracts occupy residues 7-24 (KTPG…SPAA) and 31-55 (AAQS…SGKG). Positions 76–264 (WPVAGCDEAG…VVAARRKHQP (189 aa)) constitute an RNase H type-2 domain. Positions 82, 83, and 173 each coordinate a divalent metal cation.

Belongs to the RNase HII family. Requires Mn(2+) as cofactor. Mg(2+) serves as cofactor.

The protein resides in the cytoplasm. It carries out the reaction Endonucleolytic cleavage to 5'-phosphomonoester.. Functionally, endonuclease that specifically degrades the RNA of RNA-DNA hybrids. The protein is Ribonuclease HII of Bradyrhizobium sp. (strain BTAi1 / ATCC BAA-1182).